A 511-amino-acid chain; its full sequence is GMP synthase [glutamine-hydrolyzing] (511 aa).

The 191-residue stretch at 5-195 folds into the Glutamine amidotransferase type-1 domain; it reads LILVLDFGGQ…LYKICGCSGD (191 aa). The active-site Nucleophile is the Cys-82. Residues His-169 and Glu-171 contribute to the active site. Positions 196–386 constitute a GMPS ATP-PPase domain; it reads WKMASFIEHS…LGIPEDIVMR (191 aa). 223-229 is an ATP binding site; it reads SGGVDSS.

As to quaternary structure, homodimer.

The enzyme catalyses XMP + L-glutamine + ATP + H2O = GMP + L-glutamate + AMP + diphosphate + 2 H(+). It functions in the pathway purine metabolism; GMP biosynthesis; GMP from XMP (L-Gln route): step 1/1. Functionally, catalyzes the synthesis of GMP from XMP. The polypeptide is GMP synthase [glutamine-hydrolyzing] (Acetivibrio thermocellus (strain ATCC 27405 / DSM 1237 / JCM 9322 / NBRC 103400 / NCIMB 10682 / NRRL B-4536 / VPI 7372) (Clostridium thermocellum)).